The primary structure comprises 526 residues: Probable 1,4-alpha-glucan branching enzyme MT3115 (526 aa).

Glu-205 acts as the Nucleophile in catalysis. Substrate contacts are provided by Arg-251 and Gly-268. The Proton donor role is filled by Asp-344. Substrate contacts are provided by Trp-396 and Asp-462.

It belongs to the glycosyl hydrolase 57 family.

It carries out the reaction Transfers a segment of a (1-&gt;4)-alpha-D-glucan chain to a primary hydroxy group in a similar glucan chain.. Catalyzes the formation of branch points in alpha-glucans by cleavage of an alpha-1,4 glycosidic bond and subsequent transfer of the cleaved-off oligosaccharide to a new alpha-1,6 position. Is probably involved in the biosynthesis of 6-O-methylglucosyl lipopolysaccharides (MGLP). The sequence is that of Probable 1,4-alpha-glucan branching enzyme MT3115 from Mycobacterium tuberculosis (strain CDC 1551 / Oshkosh).